The following is a 98-amino-acid chain: Large ribosomal subunit protein bL25 (98 aa).

The protein belongs to the bacterial ribosomal protein bL25 family. As to quaternary structure, part of the 50S ribosomal subunit; part of the 5S rRNA/L5/L18/L25 subcomplex. Contacts the 5S rRNA. Binds to the 5S rRNA independently of L5 and L18.

Its function is as follows. This is one of the proteins that binds to the 5S RNA in the ribosome where it forms part of the central protuberance. The protein is Large ribosomal subunit protein bL25 of Synechocystis sp. (strain ATCC 27184 / PCC 6803 / Kazusa).